Here is a 540-residue protein sequence, read N- to C-terminus: Phosphoenolpyruvate carboxykinase (ATP) (540 aa).

Arginine 65 contributes to the substrate binding site. Lysine 87 bears the N6-acetyllysine mark. Residues tyrosine 207 and lysine 213 each contribute to the substrate site. ATP is bound by residues lysine 213, histidine 232, and 248-256 (GLSGTGKTT). Mn(2+) contacts are provided by lysine 213 and histidine 232. Aspartate 269 contributes to the Mn(2+) binding site. ATP is bound by residues glutamate 297, arginine 333, 449–450 (RI), and threonine 455. Arginine 333 provides a ligand contact to substrate. Residue lysine 523 is modified to N6-acetyllysine.

Belongs to the phosphoenolpyruvate carboxykinase (ATP) family. Monomer. Mn(2+) is required as a cofactor.

Its subcellular location is the cytoplasm. The catalysed reaction is oxaloacetate + ATP = phosphoenolpyruvate + ADP + CO2. It participates in carbohydrate biosynthesis; gluconeogenesis. In terms of biological role, involved in the gluconeogenesis. Catalyzes the conversion of oxaloacetate (OAA) to phosphoenolpyruvate (PEP) through direct phosphoryl transfer between the nucleoside triphosphate and OAA. The protein is Phosphoenolpyruvate carboxykinase (ATP) of Shigella flexneri.